The sequence spans 165 residues: MEKRIANIIYSSRWLMFPVYIGLAFGFVLLTVKFFQQIICVIPEILTMSESGLVLIVLSLIDIALVGGLLVMVMFSGYENFIAKMETTENKKRLSWMGTMDVNSIKNKVASSIVAISSVHLLRLFMDADKISDNKIMWCVVIHLTFVLSAFGMAYIDKMSKKHYS.

The next 3 helical transmembrane spans lie at 15-35, 53-73, and 136-156; these read LMFP…VKFF, LVLI…LVMV, and IMWC…MAYI.

It belongs to the UPF0114 family.

It is found in the cell membrane. The polypeptide is UPF0114 protein in repA1-repA2 intergenic region (Buchnera aphidicola subsp. Thelaxes suberi).